We begin with the raw amino-acid sequence, 681 residues long: Propionyl-CoA carboxylase alpha chain (681 aa).

Positions 1–466 (MFNKILIANR…TTAFIAEEYP (466 aa)) constitute a Biotin carboxylation domain. ATP-binding positions include Lys-116, 148–209 (SNQI…PRHI), Glu-200, and Asn-235. An ATP-grasp domain is found at 120–317 (KKIAQEANVS…LVEQMIRVAA (198 aa)). Glu-275, Glu-288, and Asn-290 together coordinate Mg(2+). Residues Glu-275, Glu-288, and Asn-290 each contribute to the Mn(2+) site. Residue Glu-288 is part of the active site. Residue Phe-348 coordinates biotin. The Biotinyl-binding domain occupies 602–681 (LMPEKLPPDT…AVDDVIMEFE (80 aa)). Lys-647 bears the N6-biotinyllysine mark.

The holoenzyme is a dodecamer composed of 6 PccA/alpha subunits and 6 PccB/beta subunits. Requires Mg(2+) as cofactor. The cofactor is Mn(2+). Biotin serves as cofactor. The biotin cofactor is covalently attached to the C-terminal biotinyl-binding domain and is required for the catalytic activity.

It carries out the reaction propanoyl-CoA + hydrogencarbonate + ATP = (S)-methylmalonyl-CoA + ADP + phosphate + H(+). It participates in metabolic intermediate metabolism; propanoyl-CoA degradation; succinyl-CoA from propanoyl-CoA: step 1/3. Functionally, this is one of the 2 subunits of the biotin-dependent propionyl-CoA carboxylase (PCC), the enzyme catalyzing the carboxylation of propionyl-CoA/propanoyl-CoA to D-methylmalonyl-CoA/(S)-methylmalonyl-CoA. Within the holoenzyme, the alpha subunit catalyzes the ATP-dependent carboxylation of the biotin carried by the biotin carboxyl carrier (BCC) domain, while the beta subunit then tranfers the carboxyl group from carboxylated biotin to propionyl-CoA. In Ruegeria pomeroyi (strain ATCC 700808 / DSM 15171 / DSS-3) (Silicibacter pomeroyi), this protein is Propionyl-CoA carboxylase alpha chain.